The sequence spans 443 residues: L-ornithine N(5)-monooxygenase (443 aa).

FAD contacts are provided by residues 45–53 and Q64; that span reads DKQGDYRWH. K69 serves as a coordination point for substrate. Residue V130 participates in FAD binding. NADP(+) is bound by residues 215 to 218 and R240; that span reads GGQS. Residues 254–257 and N284 each bind substrate; that span reads NEVF. An NADP(+)-binding site is contributed by 284-286; that stretch reads NYS. 407–409 contributes to the FAD binding site; that stretch reads TLL. S410 serves as a coordination point for substrate.

The protein belongs to the lysine N(6)-hydroxylase/L-ornithine N(5)-oxygenase family. As to quaternary structure, homotetramer. FAD is required as a cofactor.

It is found in the cell inner membrane. It catalyses the reaction L-ornithine + NADPH + O2 = N(5)-hydroxy-L-ornithine + NADP(+) + H2O. Its pathway is siderophore biosynthesis; pyoverdin biosynthesis. In terms of biological role, catalyzes the conversion of L-ornithine to N(5)-hydroxyornithine, the first step in the biosynthesis of all hydroxamate-containing siderophores, such as pyoverdin. Pyoverdin is a hydroxamate siderophore composed of a 6,7-dihydroxyquinoline-containing fluorescent chromophore joined to the N-terminus of a partly cyclic octapeptide (D-Ser-L-Arg-D-Ser-L-N(5)-OH-Orn-L-Lys-L-N(5)-OH-Orn-L-Thr-L-Thr in strain PAO1). Specific for NADPH, which plays a role in stabilization of the C4a-hydroperoxyflavin intermediate. The protein is L-ornithine N(5)-monooxygenase of Pseudomonas aeruginosa (strain ATCC 15692 / DSM 22644 / CIP 104116 / JCM 14847 / LMG 12228 / 1C / PRS 101 / PAO1).